A 429-amino-acid polypeptide reads, in one-letter code: Glutamate-1-semialdehyde 2,1-aminomutase 2 (429 aa).

The residue at position 268 (Lys268) is an N6-(pyridoxal phosphate)lysine.

It belongs to the class-III pyridoxal-phosphate-dependent aminotransferase family. HemL subfamily. As to quaternary structure, homodimer. Requires pyridoxal 5'-phosphate as cofactor.

The protein resides in the cytoplasm. It carries out the reaction (S)-4-amino-5-oxopentanoate = 5-aminolevulinate. The protein operates within porphyrin-containing compound metabolism; protoporphyrin-IX biosynthesis; 5-aminolevulinate from L-glutamyl-tRNA(Glu): step 2/2. The polypeptide is Glutamate-1-semialdehyde 2,1-aminomutase 2 (Bacillus anthracis (strain A0248)).